Reading from the N-terminus, the 550-residue chain is Glucose-6-phosphate isomerase 1 (550 aa).

Glu358 functions as the Proton donor in the catalytic mechanism. Catalysis depends on residues His389 and Lys513.

This sequence belongs to the GPI family.

It is found in the cytoplasm. It carries out the reaction alpha-D-glucose 6-phosphate = beta-D-fructose 6-phosphate. It functions in the pathway carbohydrate biosynthesis; gluconeogenesis. It participates in carbohydrate degradation; glycolysis; D-glyceraldehyde 3-phosphate and glycerone phosphate from D-glucose: step 2/4. Functionally, catalyzes the reversible isomerization of glucose-6-phosphate to fructose-6-phosphate. In Streptomyces coelicolor (strain ATCC BAA-471 / A3(2) / M145), this protein is Glucose-6-phosphate isomerase 1.